The sequence spans 151 residues: Ribosome maturation factor RimP (151 aa).

This sequence belongs to the RimP family.

It localises to the cytoplasm. In terms of biological role, required for maturation of 30S ribosomal subunits. In Pseudoalteromonas translucida (strain TAC 125), this protein is Ribosome maturation factor RimP.